Reading from the N-terminus, the 180-residue chain is Large ribosomal subunit protein uL10 (180 aa).

It belongs to the universal ribosomal protein uL10 family. In terms of assembly, part of the ribosomal stalk of the 50S ribosomal subunit. The N-terminus interacts with L11 and the large rRNA to form the base of the stalk. The C-terminus forms an elongated spine to which L12 dimers bind in a sequential fashion forming a multimeric L10(L12)X complex.

In terms of biological role, forms part of the ribosomal stalk, playing a central role in the interaction of the ribosome with GTP-bound translation factors. In Thermosipho africanus (strain TCF52B), this protein is Large ribosomal subunit protein uL10.